The primary structure comprises 221 residues: Octanoyltransferase (221 aa).

A BPL/LPL catalytic domain is found at Gly14–Pro202. Residues Arg54–His61, Ser128–Gly130, and Gly141–Ala143 each bind substrate. Cys159 (acyl-thioester intermediate) is an active-site residue. The segment at Arg197–Thr221 is disordered.

This sequence belongs to the LipB family.

The protein resides in the cytoplasm. The catalysed reaction is octanoyl-[ACP] + L-lysyl-[protein] = N(6)-octanoyl-L-lysyl-[protein] + holo-[ACP] + H(+). Its pathway is protein modification; protein lipoylation via endogenous pathway; protein N(6)-(lipoyl)lysine from octanoyl-[acyl-carrier-protein]: step 1/2. In terms of biological role, catalyzes the transfer of endogenously produced octanoic acid from octanoyl-acyl-carrier-protein onto the lipoyl domains of lipoate-dependent enzymes. Lipoyl-ACP can also act as a substrate although octanoyl-ACP is likely to be the physiological substrate. This chain is Octanoyltransferase, found in Frankia casuarinae (strain DSM 45818 / CECT 9043 / HFP020203 / CcI3).